The sequence spans 356 residues: S-adenosylmethionine:tRNA ribosyltransferase-isomerase (356 aa).

The protein belongs to the QueA family. As to quaternary structure, monomer.

Its subcellular location is the cytoplasm. The enzyme catalyses 7-aminomethyl-7-carbaguanosine(34) in tRNA + S-adenosyl-L-methionine = epoxyqueuosine(34) in tRNA + adenine + L-methionine + 2 H(+). Its pathway is tRNA modification; tRNA-queuosine biosynthesis. Its function is as follows. Transfers and isomerizes the ribose moiety from AdoMet to the 7-aminomethyl group of 7-deazaguanine (preQ1-tRNA) to give epoxyqueuosine (oQ-tRNA). The polypeptide is S-adenosylmethionine:tRNA ribosyltransferase-isomerase (Xanthomonas campestris pv. campestris (strain 8004)).